Consider the following 1050-residue polypeptide: MAMGVSLTSHNNPLLRHLSPSSSWVSRSSSRLSSSPLPSFLFPCRRTLLQRKLASTDGNVGYCTTTVCQGFQHSVHQRSSSVVFNGEWELRSESNKVRMVPKIIKVGNQTEVAETHQVPGTVSAWREEANKLRERNGQIARNLDDNGYFNGSVPIISSAPSYETSQKIDYEFKPRGTTRSTTATLNKELIGITQSEPVVSLPRKGLDVGDNMDVNPKGEGIQRPLISDKSSGTANGNKNTVAISKVERSTEPSNVRENLGKIYDKVLIVDNVQAAKDTVAKLVNQFRNHVHSCDTEVSGIEVKEETPVDHGELICFSIYCGPEADFGNGKSCIWVDVLGENGREVLAEFKPYFEDSFIRKVWHNYSFDSHIIRNHGIEISGFHADTMHMARLWDSARRIKGGYSLEALTSDPKVLGGTQTKEEAEFLGKISMKTIFGKRKLKKDGSEGKIVVIPPVEELQREDREAWISYSALDAISTLKLYESMTKKLQLMDWHLDGKPVLGRTMLDFYHEFWRPFGELLVKMEAEGILVDREYLAEIEKVAKAEQQVAGSRFRNWASKYCPDAKYMNIGSDTQLRQLFFGGISNSHDEVLPVEKLFKVPNIDKVIEEGKKTPTKFRNIKLHRISDSPLSTENFTASGWPSVGGDVLKELAGKVSAEYDFMDDVSDISLEEVVEDDDVETSETQKSKTDDETDTSAYGTAYVAFGGGERGKEACHAIASLCEVCSIDSLISNFILPLQGSNVSGKDGRVHCSLNINTETGRLSARRPNLQNQPALEKDRYKIRKAFVASPGNTLVVADYGQLELRILAHLTGCKSMMEAFKAGGDFHSRTAMNMYPHVREAVENGQVILEWHPEPGEDKPPVPLLKDAFGSERRKAKMLNFSIAYGKTAVGLSRDWKVSTKEAQETVDLWYNDRQEVRKWQEMRKKEAIEDGYVLTLLGRSRRFPASKSRAQRNHIQRAAINTPVQGSAADVAMCAMLEISINQQLKKLGWRLLLQIHDEVILEGPIESAEIAKDIVVDCMSKPFNGRNILSVDLSVDAKCAQNWYAAK.

The N-terminal 91 residues, 1 to 91 (MAMGVSLTSH…VVFNGEWELR (91 aa)), are a transit peptide targeting the chloroplast and mitochondrion. Residues 202-240 (PRKGLDVGDNMDVNPKGEGIQRPLISDKSSGTANGNKNT) are disordered. A compositionally biased stretch (polar residues) spans 228 to 240 (DKSSGTANGNKNT). Residues 312–490 (ELICFSIYCG…LYESMTKKLQ (179 aa)) form the 3'-5' exonuclease domain. The disordered stretch occupies residues 673–694 (VVEDDDVETSETQKSKTDDETD). The segment at 717-1048 (AIASLCEVCS…DAKCAQNWYA (332 aa)) is polymerase.

It belongs to the DNA polymerase type-A family. Expressed in shoot apical meristem.

It localises to the plastid. Its subcellular location is the chloroplast. The protein resides in the mitochondrion. The enzyme catalyses DNA(n) + a 2'-deoxyribonucleoside 5'-triphosphate = DNA(n+1) + diphosphate. With respect to regulation, not inhibited by aphidicolin. Functionally, in addition to polymerase activity, this DNA polymerase exhibits 5'-3' exonuclease activity. Required for DNA replication and accumulation in plastids and mitochondria. May be required for DNA repair in both organelles. The chain is DNA polymerase I A, chloroplastic/mitochondrial (POLIA) from Arabidopsis thaliana (Mouse-ear cress).